The chain runs to 179 residues: MEKIIIDEDQFMRTISRISHEIIEKHKNLNDLVIVGIKRRGAEIAELVKRKINELTGSRIPSIDLDITFYRDDLEYAEPNSQSPVYNGSSDFISVQNKTVILVDDVLFTGRTIRAALDALVDFGRASKVELVIFVDRGHRELPIRADYVGKNVPTSRSEKVQVRTMKFDGCYEVALLSK.

The short motif at 100 to 112 (VILVDDVLFTGRT) is the PRPP-binding element.

Belongs to the purine/pyrimidine phosphoribosyltransferase family. PyrR subfamily.

The catalysed reaction is UMP + diphosphate = 5-phospho-alpha-D-ribose 1-diphosphate + uracil. Functionally, regulates the transcription of the pyrimidine nucleotide (pyr) operon in response to exogenous pyrimidines. Also displays a weak uracil phosphoribosyltransferase activity which is not physiologically significant. This is Bifunctional protein PyrR from Actinobacillus succinogenes (strain ATCC 55618 / DSM 22257 / CCUG 43843 / 130Z).